The chain runs to 168 residues: Putative F-box protein At1g30945 (168 aa).

The 48-residue stretch at 5 to 52 folds into the F-box domain; that stretch reads KTFDSISNDLFLEILLRLSTKSIDRSRCVSKQWASILCSQDFTESEKF.

In Arabidopsis thaliana (Mouse-ear cress), this protein is Putative F-box protein At1g30945.